A 647-amino-acid chain; its full sequence is CRE-binding bZIP protein SKO1 (647 aa).

Disordered stretches follow at residues 1–119 (MSSE…GSKR), 135–204 (STTN…QMPG), 305–331 (TPTT…TSTK), and 353–429 (KENE…EEQE). A compositionally biased stretch (polar residues) spans 51–85 (RNNSTSTITQHSQRSTHSLNSIPEENGNSTVTDNS). Phosphoserine is present on Ser94. At Thr113 the chain carries Phosphothreonine. 2 stretches are compositionally biased toward low complexity: residues 138–194 (NPSQ…SGNG) and 305–329 (TPTT…PNTS). Polar residues-rich tracts occupy residues 357–368 (NLTTQIENNDQF) and 396–405 (RKNSAVTTAP). Ser399 is modified (phosphoserine). Residues 429-492 (ERKRKEFLER…PSSSSNSQFN (64 aa)) enclose the bZIP domain. Residues 430-451 (RKRKEFLERNRVAASKFRKRKK) are basic motif. Positions 454 to 461 (IKKIENDL) are leucine-zipper. Ser558 bears the Phosphoserine mark.

This sequence belongs to the bZIP family.

Its subcellular location is the nucleus. Binds to the CRE motif 5'-TGACGTCA-3' and acts as a repressor of transcription of the SUC2 gene and most probably other genes. This is CRE-binding bZIP protein SKO1 (SKO1) from Saccharomyces cerevisiae (strain ATCC 204508 / S288c) (Baker's yeast).